Reading from the N-terminus, the 154-residue chain is Ubiquitin-conjugating enzyme E2 L3 (154 aa).

One can recognise a UBC core domain in the interval 2 to 149 (AASRRLMKEL…AEEFTKKYGE (148 aa)). Residue Cys86 is the Glycyl thioester intermediate of the active site. Lys131 carries the N6-acetyllysine modification.

This sequence belongs to the ubiquitin-conjugating enzyme family. Interacts with PRKN; involved in ubiquitination and degradation of misfolded proteins. Interacts with UBE3A. Interacts with CCNB1IP1, CBL, ZAP70, RNF19A, RNF19B and RNF144B. Interacts with ARIH1. Interacts with ARIH2 (via RING-type 1). Interacts with NCOA1; they functionally interact to regulate progesterone receptor transcriptional activity. Interacts with NDFIP1 (via N-terminus); the interaction mediates recruitment of UBE2L3 to ITCH and causes MAP3K7 ubiquitination. Post-translationally, ubiquitinated. The alteration of UBE2L3 protein levels during the S-phase of the cell cycle is due to ubiquitin-dependent proteasomal degradation. Autoubiquitinated in vitro.

The protein resides in the nucleus. The protein localises to the cytoplasm. It carries out the reaction S-ubiquitinyl-[E1 ubiquitin-activating enzyme]-L-cysteine + [E2 ubiquitin-conjugating enzyme]-L-cysteine = [E1 ubiquitin-activating enzyme]-L-cysteine + S-ubiquitinyl-[E2 ubiquitin-conjugating enzyme]-L-cysteine.. It participates in protein modification; protein ubiquitination. Ubiquitin-conjugating enzyme E2 that specifically acts with HECT-type and RBR family E3 ubiquitin-protein ligases. Does not function with most RING-containing E3 ubiquitin-protein ligases because it lacks intrinsic E3-independent reactivity with lysine: in contrast, it has activity with the RBR family E3 enzymes, such as PRKN, RNF31 and ARIH1, that function like RING-HECT hybrids. Accepts ubiquitin from the E1 complex and catalyzes its covalent attachment to other proteins. Mediates ubiquitination by the CUL9-RBX1 complex. In vitro catalyzes 'Lys-11'-linked polyubiquitination. Involved in the selective degradation of short-lived and abnormal proteins. Down-regulated during the S-phase it is involved in progression through the cell cycle. Regulates nuclear hormone receptors transcriptional activity. May play a role in myelopoiesis. This chain is Ubiquitin-conjugating enzyme E2 L3 (UBE2L3), found in Bos taurus (Bovine).